We begin with the raw amino-acid sequence, 137 residues long: Fibroblast growth factor 2 (137 aa).

N27 serves as a coordination point for heparin. Y73 carries the phosphotyrosine; by TEC modification. A Glycyl lysine isopeptide (Lys-Gly) (interchain with G-Cter in SUMO1) cross-link involves residue K86. The segment at 119–135 (KRTGQYKLGSKTGPGQK) is heparin-binding.

It belongs to the heparin-binding growth factors family. In terms of assembly, monomer. Homodimer. Interacts with FGFR1, FGFR2, FGFR3 and FGFR4. Affinity between fibroblast growth factors (FGFs) and their receptors is increased by heparan sulfate glycosaminoglycans that function as coreceptors. Interacts with CSPG4, FGFBP1 and TEC. Found in a complex with FGFBP1, FGF1 and FGF2. Interacts with FGFBP3. Interacts with integrin ITGAV:ITGB3; the interaction is required for FGF2 signaling. Interacts with SNORC (via the extracellular domain). Interacts with glypican GPC3. In terms of processing, phosphorylation at Tyr-73 regulates FGF2 unconventional secretion.

The protein resides in the secreted. It is found in the nucleus. Acts as a ligand for FGFR1, FGFR2, FGFR3 and FGFR4. Also acts as an integrin ligand which is required for FGF2 signaling. Binds to integrin ITGAV:ITGB3. Plays an important role in the regulation of cell survival, cell division, cell differentiation and cell migration. Functions as a potent mitogen in vitro. Can induce angiogenesis. Mediates phosphorylation of ERK1/2 and thereby promotes retinal lens fiber differentiation. This is Fibroblast growth factor 2 (FGF2) from Oryctolagus cuniculus (Rabbit).